Reading from the N-terminus, the 232-residue chain is 7-cyano-7-deazaguanine synthase (232 aa).

An ATP-binding site is contributed by 13–23; it reads LSGGLDSATVL. 4 residues coordinate Zn(2+): C194, C204, C207, and C210.

This sequence belongs to the QueC family. The cofactor is Zn(2+).

The catalysed reaction is 7-carboxy-7-deazaguanine + NH4(+) + ATP = 7-cyano-7-deazaguanine + ADP + phosphate + H2O + H(+). It participates in purine metabolism; 7-cyano-7-deazaguanine biosynthesis. In terms of biological role, catalyzes the ATP-dependent conversion of 7-carboxy-7-deazaguanine (CDG) to 7-cyano-7-deazaguanine (preQ(0)). The chain is 7-cyano-7-deazaguanine synthase from Hydrogenovibrio crunogenus (strain DSM 25203 / XCL-2) (Thiomicrospira crunogena).